Consider the following 433-residue polypeptide: Succinate--CoA ligase [GDP-forming] subunit beta, mitochondrial (433 aa).

The transit peptide at 1 to 38 (MASPVAIAAQAGKLLRERALRPLLAVRSQAGHLTPRRW) directs the protein to the mitochondrion. In terms of domain architecture, ATP-grasp spans 47-275 (KKLMSEHGVR…NAEFRQKDIF (229 aa)). Gln58 is a GTP binding site. Residue Lys67 is modified to N6-acetyllysine; alternate. At Lys67 the chain carries N6-succinyllysine; alternate. Position 74 is an N6-acetyllysine (Lys74). At Lys79 the chain carries N6-succinyllysine. 91-93 (GRG) provides a ligand contact to GTP. Lys112, Lys133, and Lys140 each carry N6-acetyllysine. Residue Leu147 participates in GTP binding. Ser162 is subject to Phosphoserine. N6-acetyllysine is present on Lys201. Ser217 is modified (phosphoserine). An N6-acetyllysine mark is found at Lys219 and Lys228. The Mg(2+) site is built by Asn244 and Asp258. Position 272 is an N6-acetyllysine (Lys272). Asn309 contacts substrate. The residue at position 339 (Lys339) is an N6-succinyllysine. N6-acetyllysine is present on Lys348. 366 to 368 (GIV) provides a ligand contact to substrate. An N6-acetyllysine mark is found at Lys387, Lys407, and Lys424.

This sequence belongs to the succinate/malate CoA ligase beta subunit family. GTP-specific subunit beta subfamily. Heterodimer of an alpha and a beta subunit. The beta subunit determines specificity for GTP. The cofactor is Mg(2+).

The protein resides in the mitochondrion. It carries out the reaction GTP + succinate + CoA = succinyl-CoA + GDP + phosphate. It functions in the pathway carbohydrate metabolism; tricarboxylic acid cycle; succinate from succinyl-CoA (ligase route): step 1/1. In terms of biological role, GTP-specific succinyl-CoA synthetase functions in the citric acid cycle (TCA), coupling the hydrolysis of succinyl-CoA to the synthesis of GTP and thus represents the only step of substrate-level phosphorylation in the TCA. The beta subunit provides nucleotide specificity of the enzyme and binds the substrate succinate, while the binding sites for coenzyme A and phosphate are found in the alpha subunit. This Mus musculus (Mouse) protein is Succinate--CoA ligase [GDP-forming] subunit beta, mitochondrial.